The sequence spans 512 residues: Gustatory and odorant receptor 63a (512 aa).

The tract at residues 1–24 (MRPSGEKVVKGHGQGNSGHSLSGM) is disordered. Residues 1 to 129 (MRPSGEKVVK…PARAKFEMNS (129 aa)) lie on the Cytoplasmic side of the membrane. Residues 130–150 (ASFIYSVVFFVLLACYVGYVA) form a helical membrane-spanning segment. Over 151-166 (NNRIHIVRSLSGPFEE) the chain is Extracellular. Residues 167 to 187 (AVIAYLFLVNILPIMIIPILW) traverse the membrane as a helical segment. Residues 188–222 (YEARKIAKLFNDWDDFEVLYYQISGHSLPLKLRQK) are Cytoplasmic-facing. Residues 223-243 (AVYIAIVLPILSVLSVVITHV) form a helical membrane-spanning segment. Residues 244 to 265 (TMSDLNINQVVPYCILDNLTAM) are Extracellular-facing. Asparagine 261 carries N-linked (GlcNAc...) asparagine glycosylation. Residues 266-285 (LGAWWFLICEAMSITAHLLA) traverse the membrane as a helical segment. Residues 286–324 (ERFQKALKHIGPAAMVADYRVLWLRLSKLTRDTGNALCY) are Cytoplasmic-facing. The helical transmembrane segment at 325 to 345 (TFVFMSLYLFFIITLSIYGLM) threads the bilayer. Over 346–350 (SQLSE) the chain is Extracellular. Residues 351 to 371 (GFGIKDIGLTITALWNIGLLF) traverse the membrane as a helical segment. At 372–436 (YICDEAHYAS…FFDVNRTLFK (65 aa)) the chain is on the cytoplasmic side. A helical transmembrane segment spans residues 437–457 (GLLTTMVTYLVVLLQFQISIP). Residues 458–512 (TDKGDSEGANNITVVDFVMDSLDNDMSLMGASTLSTTTVGTTLPPPIMKLKGRKG) are Extracellular-facing. N-linked (GlcNAc...) asparagine glycosylation occurs at asparagine 468.

It belongs to the insect chemoreceptor superfamily. Gustatory receptor (GR) family. Gr21a subfamily. Gr21a and Gr63a probably form a heterodimer that responds to CO(2). In terms of tissue distribution, expressed in the medial aspect of the third antennal segment. Carbon dioxide-responsive neurons coexpress Gr21a and Gr63a in a pair of chemosensory receptors at both larval and adult life stages.

The protein localises to the cell membrane. Its function is as follows. Gustatory and odorant receptor which mediates acceptance or avoidance behavior, depending on its substrates. Gr21a and Gr63a together are sufficient for carbon dioxide detection and avoidance behavior. It is possible that the CO(2) receptors Gr63a and Gr21a activate the TRPC channels through Galpha49B and Plc21C. This innate olfactory avoidance behavior can be inhibited by inhibitory interactions of the odors such as 1-hexanol and 2,3-butanedione with Gr21a and Gr63a. The protein is Gustatory and odorant receptor 63a (Gr63a) of Drosophila melanogaster (Fruit fly).